A 126-amino-acid chain; its full sequence is CD59 glycoprotein (126 aa).

Residues Met1–Ser22 form the signal peptide. The UPAR/Ly6 domain maps to Leu23 to Thr110. 5 disulfide bridges follow: Cys25/Cys48, Cys28/Cys35, Cys41/Cys61, Cys67/Cys85, and Cys86/Cys91. Asn38 carries an N-linked (GlcNAc...) asparagine glycan. Residue Asn101 is the site of GPI-anchor amidated asparagine attachment. A propeptide spans Gly102 to Phe126 (removed in mature form).

As to quaternary structure, interacts with T-cell surface antigen CD2. Post-translationally, N- and O-glycosylated.

It localises to the cell membrane. The protein localises to the secreted. Its function is as follows. Potent inhibitor of the complement membrane attack complex (MAC) action, which protects self-cells from damage during complement activation. Acts by binding to the beta-haipins of C8 (C8A and C8B) components of the assembling MAC, forming an intermolecular beta-sheet that prevents incorporation of the multiple copies of C9 required for complete formation of the osmolytic pore. The sequence is that of CD59 glycoprotein from Rattus norvegicus (Rat).